The primary structure comprises 292 residues: Zinc finger protein OZF (292 aa).

10 C2H2-type zinc fingers span residues 16–38, 44–66, 72–94, 100–122, 128–150, 156–178, 184–206, 212–234, 240–262, and 268–290; these read FACK…EHFH, FECN…QSTH, FECS…QKIH, FECK…QRTH, FICK…EKIH, FKCN…QNIH, YECN…VRIH, YECN…VRSH, YGCN…LRIH, and YQCS…QKIH. Residues Lys-28, Lys-51, and Lys-56 each participate in a glycyl lysine isopeptide (Lys-Gly) (interchain with G-Cter in SUMO2) cross-link. Glycyl lysine isopeptide (Lys-Gly) (interchain with G-Cter in SUMO) cross-links involve residues Lys-157 and Lys-169. Lys-173 is covalently cross-linked (Glycyl lysine isopeptide (Lys-Gly) (interchain with G-Cter in SUMO2)). An interaction with TERF2IP region spans residues 212–292; sequence YECNVCGKAF…HIRHQKIHTH (81 aa).

The protein belongs to the krueppel C2H2-type zinc-finger protein family. Binds DNA. Interacts with SUMO conjugating enzyme UBC9/UBE2I. Interacts with the telomeric protein TERF2IP. As to expression, expressed in heart, brain, liver, lung, skeletal muscle and kidney, and at much lower level in spleen and testicle. Expressed in lactating mammary gland.

The protein resides in the nucleus. This Mus musculus (Mouse) protein is Zinc finger protein OZF (Znf146).